We begin with the raw amino-acid sequence, 363 residues long: NADH-quinone oxidoreductase subunit H (363 aa).

The next 9 membrane-spanning stretches (helical) occupy residues 62–82 (GPMY…KLLF), 94–114 (AIFV…WAVV), 127–147 (VGLL…ILAG), 166–186 (VVSY…AAGS), 202–222 (FFDW…VSGV), 239–257 (IVAG…LFFL), 264–286 (ILVS…QGWV), 293–313 (LIDW…LFFA), and 339–359 (FIPL…SGVI).

This sequence belongs to the complex I subunit 1 family. As to quaternary structure, NDH-1 is composed of 14 different subunits. Subunits NuoA, H, J, K, L, M, N constitute the membrane sector of the complex.

It is found in the cell inner membrane. The catalysed reaction is a quinone + NADH + 5 H(+)(in) = a quinol + NAD(+) + 4 H(+)(out). NDH-1 shuttles electrons from NADH, via FMN and iron-sulfur (Fe-S) centers, to quinones in the respiratory chain. The immediate electron acceptor for the enzyme in this species is believed to be ubiquinone. Couples the redox reaction to proton translocation (for every two electrons transferred, four hydrogen ions are translocated across the cytoplasmic membrane), and thus conserves the redox energy in a proton gradient. This subunit may bind ubiquinone. The chain is NADH-quinone oxidoreductase subunit H from Xylella fastidiosa (strain 9a5c).